A 249-amino-acid chain; its full sequence is Aspartate/glutamate leucyltransferase (249 aa).

Belongs to the R-transferase family. Bpt subfamily.

It is found in the cytoplasm. The enzyme catalyses N-terminal L-glutamyl-[protein] + L-leucyl-tRNA(Leu) = N-terminal L-leucyl-L-glutamyl-[protein] + tRNA(Leu) + H(+). It carries out the reaction N-terminal L-aspartyl-[protein] + L-leucyl-tRNA(Leu) = N-terminal L-leucyl-L-aspartyl-[protein] + tRNA(Leu) + H(+). Functions in the N-end rule pathway of protein degradation where it conjugates Leu from its aminoacyl-tRNA to the N-termini of proteins containing an N-terminal aspartate or glutamate. The sequence is that of Aspartate/glutamate leucyltransferase from Brucella melitensis biotype 2 (strain ATCC 23457).